A 166-amino-acid chain; its full sequence is Large ribosomal subunit protein uL10 (166 aa).

Belongs to the universal ribosomal protein uL10 family. In terms of assembly, part of the ribosomal stalk of the 50S ribosomal subunit. The N-terminus interacts with L11 and the large rRNA to form the base of the stalk. The C-terminus forms an elongated spine to which L12 dimers bind in a sequential fashion forming a multimeric L10(L12)X complex.

Forms part of the ribosomal stalk, playing a central role in the interaction of the ribosome with GTP-bound translation factors. The polypeptide is Large ribosomal subunit protein uL10 (Listeria monocytogenes serotype 4b (strain CLIP80459)).